A 124-amino-acid chain; its full sequence is Fluoride-specific ion channel FluC (124 aa).

4 helical membrane passes run 3 to 23, 36 to 56, 66 to 86, and 100 to 120; these read YLLV…INTV, TFFI…YFAF, LFLM…SLDA, and LYVL…LALI. Residues Gly74 and Thr77 each contribute to the Na(+) site.

This sequence belongs to the fluoride channel Fluc/FEX (TC 1.A.43) family.

Its subcellular location is the cell inner membrane. The catalysed reaction is fluoride(in) = fluoride(out). With respect to regulation, na(+) is not transported, but it plays an essential structural role and its presence is essential for fluoride channel function. Functionally, fluoride-specific ion channel. Important for reducing fluoride concentration in the cell, thus reducing its toxicity. The chain is Fluoride-specific ion channel FluC from Rhodopseudomonas palustris (strain BisB5).